Reading from the N-terminus, the 593-residue chain is Kelch-like protein 2 (593 aa).

The interval 1–29 is disordered; that stretch reads MESPPLPPACTKQGHQKPLDSKDENPEKH. The span at 17-29 shows a compositional bias: basic and acidic residues; that stretch reads KPLDSKDENPEKH. The BTB domain occupies 56 to 123; that stretch reads CDVTIVAEDM…VYTAEIQVTE (68 aa). 6 Kelch repeats span residues 308–353, 354–400, 402–447, 449–496, 497–543, and 545–591; these read LMVV…YMAG, LVFA…VLNG, LYAV…VVGG, LYAV…VLNN, LLYA…AVNG, and LYVV…VIDK.

As to quaternary structure, component of the BCR(KLHL2) E3 ubiquitin ligase complex, at least composed of CUL3 and KLHL2 and RBX1. Binds actin. Interacts with KLHL12. Interacts (via N-terminus) with FYN (via SH3 domain). As to expression, detected in brain neurons, oligodendrocytes and astrocytes (at protein level).

It localises to the cytoplasm. The protein localises to the cytoskeleton. The protein resides in the cell projection. It is found in the ruffle. Its subcellular location is the lamellipodium. It localises to the cytosol. It participates in protein modification; protein ubiquitination. Substrate-specific adapter of a BCR (BTB-CUL3-RBX1) E3 ubiquitin ligase complex that mediates the ubiquitination of target proteins, such as NPTXR, WNK1, WNK3 and WNK4, leading most often to their proteasomal degradation. The BCR(KLHL2) complex catalyzes ubiquitination and degradation of NPTXR. Responsible for degradative ubiquitination of the WNK kinases WNK1, WNK3 and WNK4. Plays a role in the reorganization of the actin cytoskeleton. Promotes growth of cell projections in oligodendrocyte precursors. This chain is Kelch-like protein 2, found in Rattus norvegicus (Rat).